Here is a 533-residue protein sequence, read N- to C-terminus: MSFNPAAGLLGKLKKLWNDTKNDYLEWERSQQGQISESVVKNHSPSKRKRRPSKEPSLSPKRRKNILNDQKKDEESIPNAGTQSQNFTHLSASKIRISDEDRIKPLVDLNQDHSFDMAYLTPASAPPPRFRFVPPKSDAKSHSAPRSLEGVTSLSDSHFNSLEANLKAISKDSNNKAHNNRYDESSLTNPEFSILVERLKSIEENLQSLQERISHCERSVSLSPSFAPPSNVKSPVQQHRSFVSSSARAKKNWGRQSNSPNSNKKTDHAYPGASMNTERGLIQNLEDSDDIHEESSDTLEEPLLINELNRTSFLNSNNNLKLNEAEENQNLLNLRSPKSSGKADNLTIKSSSNIDKVTSNDLYLDNNLQSHFKVTESQPTNLGRKEYSNSPFSIRARKDAATTSSSFESYHNTQTIQSPMKFTKATPLKDNESASVDESKVNVLSENQSLQADTATLEQLTPIPKARWNQLANKHPSLSNSAASPPVSSPGLRRSHIPVHEGLKHTRDGVAETKDALAKLREKMQERLKNHTS.

Polar residues-rich tracts occupy residues 30–43 (SQQGQISESVVKNH), 79–91 (NAGTQSQNFTHLS), 231–247 (NVKSPVQQHRSFVSSSA), and 254–263 (GRQSNSPNSN). 2 disordered regions span residues 30–92 (SQQG…HLSA) and 221–274 (SLSP…PGAS). S336 is subject to Phosphoserine. Positions 475 to 510 (HPSLSNSAASPPVSSPGLRRSHIPVHEGLKHTRDGV) are disordered. A compositionally biased stretch (low complexity) spans 476 to 490 (PSLSNSAASPPVSSP). Over residues 498–510 (PVHEGLKHTRDGV) the composition is skewed to basic and acidic residues.

The protein localises to the nucleus. This is an uncharacterized protein from Schizosaccharomyces pombe (strain 972 / ATCC 24843) (Fission yeast).